Reading from the N-terminus, the 246-residue chain is Virulence plasmid protein pGP6-D (246 aa).

The protein belongs to the UPF0137 (pGP6-D) family.

This is Virulence plasmid protein pGP6-D from Chlamydia psittaci (Chlamydophila psittaci).